Consider the following 399-residue polypeptide: Nicotinate phosphoribosyltransferase (399 aa).

His-221 carries the phosphohistidine; by autocatalysis modification.

The protein belongs to the NAPRTase family. Transiently phosphorylated on a His residue during the reaction cycle. Phosphorylation strongly increases the affinity for substrates and increases the rate of nicotinate D-ribonucleotide production. Dephosphorylation regenerates the low-affinity form of the enzyme, leading to product release.

The enzyme catalyses nicotinate + 5-phospho-alpha-D-ribose 1-diphosphate + ATP + H2O = nicotinate beta-D-ribonucleotide + ADP + phosphate + diphosphate. It functions in the pathway cofactor biosynthesis; NAD(+) biosynthesis; nicotinate D-ribonucleotide from nicotinate: step 1/1. Catalyzes the synthesis of beta-nicotinate D-ribonucleotide from nicotinate and 5-phospho-D-ribose 1-phosphate at the expense of ATP. This Buchnera aphidicola subsp. Acyrthosiphon pisum (strain 5A) protein is Nicotinate phosphoribosyltransferase.